The primary structure comprises 132 residues: Small ribosomal subunit protein uS8 (132 aa).

This sequence belongs to the universal ribosomal protein uS8 family. As to quaternary structure, part of the 30S ribosomal subunit. Contacts proteins S5 and S12.

Its function is as follows. One of the primary rRNA binding proteins, it binds directly to 16S rRNA central domain where it helps coordinate assembly of the platform of the 30S subunit. In Beijerinckia indica subsp. indica (strain ATCC 9039 / DSM 1715 / NCIMB 8712), this protein is Small ribosomal subunit protein uS8.